The sequence spans 639 residues: Chaperone protein DnaK (639 aa).

Thr198 carries the phosphothreonine; by autocatalysis modification. The interval 601–639 (AQQAPGADSCGGDCGQQQEAGAKPKDEKVVDADFEEVKK) is disordered. Residues 622–639 (AKPKDEKVVDADFEEVKK) show a composition bias toward basic and acidic residues.

It belongs to the heat shock protein 70 family.

Its function is as follows. Acts as a chaperone. This chain is Chaperone protein DnaK, found in Trichlorobacter lovleyi (strain ATCC BAA-1151 / DSM 17278 / SZ) (Geobacter lovleyi).